The following is a 105-amino-acid chain: L-rhamnose mutarotase (105 aa).

Tyr-19 contacts substrate. Catalysis depends on His-23, which acts as the Proton donor. Residues Tyr-42 and 77–78 (WW) each bind substrate.

This sequence belongs to the rhamnose mutarotase family. In terms of assembly, homodimer.

Its subcellular location is the cytoplasm. The catalysed reaction is alpha-L-rhamnose = beta-L-rhamnose. It participates in carbohydrate metabolism; L-rhamnose metabolism. Its function is as follows. Involved in the anomeric conversion of L-rhamnose. This chain is L-rhamnose mutarotase, found in Mesorhizobium japonicum (strain LMG 29417 / CECT 9101 / MAFF 303099) (Mesorhizobium loti (strain MAFF 303099)).